A 152-amino-acid chain; its full sequence is SKP1-like protein 12 (152 aa).

The tract at residues 94 to 152 (ILAANYLNIKSLFDLTCQTVADMIKGKTPEEIRSTFNIENDFTPEEEEAVRKENQWAFE) is interaction with the F-box domain of F-box proteins.

This sequence belongs to the SKP1 family. Part of a SCF (SKP1-cullin-F-box) protein ligase complex. Interacts with ADO3/FKF1, COI1/FBL2, EBF1/FBL6, PP2B10, At3g61590 and At5g49610. As to expression, expressed in young seedlings, roots, leaves, floral stems, inflorescences, and siliques, with a slightly higher level in inflorescence than in other tissues.

It localises to the nucleus. Its pathway is protein modification; protein ubiquitination. In terms of biological role, involved in ubiquitination and subsequent proteasomal degradation of target proteins. Together with CUL1, RBX1 and a F-box protein, it forms a SCF E3 ubiquitin ligase complex. The functional specificity of this complex depends on the type of F-box protein. In the SCF complex, it serves as an adapter that links the F-box protein to CUL1. Plays a role during early flowers reproductive development. The chain is SKP1-like protein 12 (ASK12) from Arabidopsis thaliana (Mouse-ear cress).